The sequence spans 334 residues: Iron-uptake system permease protein FeuB (334 aa).

Helical transmembrane passes span 9 to 29 (IILI…ILYG), 63 to 83 (AAGA…MQGI), 91 to 111 (PSIM…MVLL), 119 to 139 (MMIY…GLAA), 150 to 170 (LAII…AMSI), 191 to 211 (PDFL…AISL), 243 to 263 (VIIL…VGLV), 281 to 301 (PCSC…SRFI), and 305 to 325 (FETP…LYLI).

The protein belongs to the binding-protein-dependent transport system permease family. FecCD subfamily. In terms of assembly, the complex is composed of one ATP-binding protein (YusV), two transmembrane proteins (FeuB and FeuC) and a solute-binding protein (FeuA).

The protein localises to the cell membrane. It localises to the membrane raft. Functionally, involved in the uptake of iron. Probably responsible for the translocation of the substrate across the membrane. Its function is as follows. Part of the ABC transporter complex FeuABC/YusV involved in import of the catecholate siderophores bacillibactin and enterobactin. This is Iron-uptake system permease protein FeuB (feuB) from Bacillus subtilis (strain 168).